The primary structure comprises 954 residues: Isoleucine--tRNA ligase (954 aa).

Residues 58 to 68 (PYANGDIHIGH) carry the 'HIGH' region motif. E572 lines the L-isoleucyl-5'-AMP pocket. Positions 613–617 (KMSKS) match the 'KMSKS' region motif. K616 lines the ATP pocket. 4 residues coordinate Zn(2+): C917, C920, C937, and C940.

Belongs to the class-I aminoacyl-tRNA synthetase family. IleS type 1 subfamily. In terms of assembly, monomer. Zn(2+) is required as a cofactor.

Its subcellular location is the cytoplasm. The catalysed reaction is tRNA(Ile) + L-isoleucine + ATP = L-isoleucyl-tRNA(Ile) + AMP + diphosphate. Catalyzes the attachment of isoleucine to tRNA(Ile). As IleRS can inadvertently accommodate and process structurally similar amino acids such as valine, to avoid such errors it has two additional distinct tRNA(Ile)-dependent editing activities. One activity is designated as 'pretransfer' editing and involves the hydrolysis of activated Val-AMP. The other activity is designated 'posttransfer' editing and involves deacylation of mischarged Val-tRNA(Ile). This chain is Isoleucine--tRNA ligase, found in Photobacterium profundum (strain SS9).